The chain runs to 319 residues: uncharacterized protein (319 aa).

A run of 9 helical transmembrane segments spans residues 11–31 (GLWAGFIAFVIAMLALDLGVF), 43–63 (ALGWSALWVSLALVFGAGVWW), 83–103 (LSVDNIFVFVVIFSALRIPAL), 108–128 (VLFWGILSALALRAIMIFAGV), 134–154 (FHWLIYVFGGFLIITGVKLFL), 195–215 (LATPLLMALLLVEASDILFAL), 220–240 (AIFAVTTDPFIVFTSNIFAIL), 260–280 (KVGLSAVLVFVGTKMAIIDFV), and 284–304 (PEVSLSVIAGLLGASIVASLI).

This sequence belongs to the TerC family.

It localises to the cell membrane. This is an uncharacterized protein from Myxococcus xanthus.